The primary structure comprises 801 residues: Na(+)/H(+) antiporter subunit A1 (801 aa).

21 consecutive transmembrane segments (helical) span residues 4–25 (LHIAVILPLIFALIIPILYRFF), 30–49 (LGWFVLPVPIVIFIYMLTLI), 79–101 (LGLLFSLLISGIGSLVVLYSIGY), 108–127 (LGNFYCYLLLFMGAMLGVVL), 131–153 (VIILYLFWELTSFSSFLLISFWR), 166–188 (LIITVFGGLSLLGGIILLAIPTQ), 208–230 (FIFAMILIMIGAFTKSAQFPFYI), 243–265 (SAYLHSATMVKAGLYLIARMTPI), 270–289 (QGWVWTVTLVGLITLFWASL), 302–324 (AFSTVSQLGMIMAMLGIGAISYH), 339–361 (AAIFHLINHATFKGALFMITGAV), 373–395 (LGGLLTIMPISFTITVITALSMA), 429–451 (YLFPIIGIVGSVFTFVYSIKFIM), 472–494 (ILMLLSPAILATLVIVFGLFPGI), 526–548 (AFLSTLVIYILGILLIVTFSYWV), 589–611 (NNLVIIFGALILLTFVTIFSVPF), 621–641 (IRIFEVCIVILLLSAAFLILF), 646–668 (LFSIIMLSAVGYAVSVLFIFFKA), 672–694 (ALTQFVVESISTALFLLCFYHLP), 707–729 (LTNALIAGGVGLSVIIIGLIAYG), and 767–784 (LFESSVLGIAGLAVYTMI).

It belongs to the CPA3 antiporters (TC 2.A.63) subunit A family. In terms of assembly, may form a heterooligomeric complex that consists of seven subunits: mnhA1, mnhB1, mnhC1, mnhD1, mnhE1, mnhF1 and mnhG1.

The protein resides in the cell membrane. Na(+) extrusion is completely inhibited by the H(+) conductor carbonyl cyanide m-chlorophenylhydrazone (CCCP). Its function is as follows. Mnh complex is a Na(+)/H(+) antiporter involved in Na(+) excretion. In Staphylococcus aureus (strain MSSA476), this protein is Na(+)/H(+) antiporter subunit A1 (mnhA1).